The sequence spans 75 residues: Lipid-anchored plasma membrane protein CPP2 (75 aa).

The segment at 1-43 (MSQQQGYYQQGPPQQGYYQQGPPQQGYYQQGPPQQGYPQQQPV) is disordered. 3 consecutive repeat copies span residues 4–13 (QQGYYQQGPP), 14–23 (QQGYYQQGPP), and 24–33 (QQGYYQQGPP). Residues 4–33 (QQGYYQQGPPQQGYYQQGPPQQGYYQQGPP) are 3 X 10 AA tandem repeats of Q-Q-G-Y-Y-Q-Q-G-P-P.

Belongs to the CYSTM1 family. Post-translationally, palmitoylated near the C-terminus.

Its subcellular location is the cell membrane. The polypeptide is Lipid-anchored plasma membrane protein CPP2 (Saccharomyces cerevisiae (strain ATCC 204508 / S288c) (Baker's yeast)).